Reading from the N-terminus, the 115-residue chain is Aspartate 1-decarboxylase (115 aa).

Ser25 (schiff-base intermediate with substrate; via pyruvic acid) is an active-site residue. Ser25 bears the Pyruvic acid (Ser) mark. Position 57 (Thr57) interacts with substrate. Tyr58 acts as the Proton donor in catalysis. Gly72–Ala74 provides a ligand contact to substrate.

It belongs to the PanD family. In terms of assembly, heterooctamer of four alpha and four beta subunits. The cofactor is pyruvate. In terms of processing, is synthesized initially as an inactive proenzyme, which is activated by self-cleavage at a specific serine bond to produce a beta-subunit with a hydroxyl group at its C-terminus and an alpha-subunit with a pyruvoyl group at its N-terminus.

It localises to the cytoplasm. The enzyme catalyses L-aspartate + H(+) = beta-alanine + CO2. Its pathway is cofactor biosynthesis; (R)-pantothenate biosynthesis; beta-alanine from L-aspartate: step 1/1. In terms of biological role, catalyzes the pyruvoyl-dependent decarboxylation of aspartate to produce beta-alanine. This is Aspartate 1-decarboxylase from Campylobacter fetus subsp. fetus (strain 82-40).